A 110-amino-acid chain; its full sequence is Small ribosomal subunit protein bS16 (110 aa).

A compositionally biased stretch (basic and acidic residues) spans 81-104; that stretch reads VRPAEVLGKQKQEKERSAKKKDAT. The interval 81–110 is disordered; the sequence is VRPAEVLGKQKQEKERSAKKKDATASETSE.

This sequence belongs to the bacterial ribosomal protein bS16 family.

This chain is Small ribosomal subunit protein bS16, found in Prochlorococcus marinus (strain NATL1A).